A 495-amino-acid polypeptide reads, in one-letter code: Ferruginol synthase (495 aa).

Residue Met1 is a topological domain, lumenal. A helical membrane pass occupies residues 2 to 22 (DSFPLLAALFFIAATITFLSF). Topologically, residues 23–495 (RRRRNLPPGP…PLRIIPIVKS (473 aa)) are cytoplasmic. Cys437 is a binding site for heme.

It belongs to the cytochrome P450 family. Heme serves as cofactor. As to expression, expression is more abundant in the rhizome.

The protein localises to the endoplasmic reticulum membrane. The catalysed reaction is abieta-8,11,13-triene + reduced [NADPH--hemoprotein reductase] + O2 = ferruginol + oxidized [NADPH--hemoprotein reductase] + H2O + H(+). In terms of biological role, cytochrome P450 enzyme (CYP) which catalyzes a unique two-electron oxidation cascade on abieta-8,11,13-triene to produce ferruginol, an intermediate in tanshinone biosynthesis. The protein is Ferruginol synthase of Salvia miltiorrhiza (Chinese sage).